A 309-amino-acid polypeptide reads, in one-letter code: Fructosamine-3-kinase (309 aa).

Methionine 1 carries the N-acetylmethionine modification. An ATP-binding site is contributed by 89–91 (EHL). Aspartate 217 functions as the Proton acceptor in the catalytic mechanism.

It belongs to the fructosamine kinase family. In terms of assembly, monomer. In terms of tissue distribution, widely expressed. Expressed in erythrocytes.

It carries out the reaction N(6)-(D-fructosyl)-L-lysyl-[protein] + ATP = N(6)-(3-O-phospho-D-fructosyl)-L-lysyl-[protein] + ADP + H(+). It catalyses the reaction N(6)-D-ribulosyl-L-lysyl-[protein] + ATP = N(6)-(3-O-phospho-D-ribulosyl)-L-lysyl-[protein] + ADP + H(+). The enzyme catalyses N(6)-(D-psicosyl)-L-lysyl-[protein] + ATP = N(6)-(3-O-phospho-D-psicosyl)-L-lysyl-[protein] + ADP + H(+). Fructosamine-3-kinase involved in protein deglycation by mediating phosphorylation of fructoselysine residues on glycated proteins, to generate fructoselysine-3 phosphate. Fructoselysine-3 phosphate adducts are unstable and decompose under physiological conditions. Involved in intracellular deglycation in erythrocytes. Involved in the response to oxidative stress by mediating deglycation of NFE2L2/NRF2, glycation impairing NFE2L2/NRF2 function. Also able to phosphorylate psicosamines and ribulosamines. In Homo sapiens (Human), this protein is Fructosamine-3-kinase.